We begin with the raw amino-acid sequence, 265 residues long: Small ribosomal subunit protein uS2 (265 aa).

The disordered stretch occupies residues 231 to 265 (VEEEYEDYEGSEEDYDYDETEYADSVIPEDGEEAE).

It belongs to the universal ribosomal protein uS2 family.

The polypeptide is Small ribosomal subunit protein uS2 (Nostoc sp. (strain PCC 7120 / SAG 25.82 / UTEX 2576)).